Reading from the N-terminus, the 337-residue chain is Putative [LysW]-lysine/[LysW]-ornithine hydrolase (337 aa).

Zn(2+) is bound at residue histidine 67. Aspartate 69 is a catalytic residue. Aspartate 91 serves as a coordination point for Zn(2+). Catalysis depends on glutamate 118, which acts as the Proton acceptor. Zn(2+) is bound by residues glutamate 119, glutamate 140, and histidine 298.

The protein belongs to the peptidase M20A family. LysK subfamily. Requires Zn(2+) as cofactor. The cofactor is Co(2+).

It localises to the cytoplasm. The enzyme catalyses [amino-group carrier protein]-C-terminal-gamma-(L-lysyl)-L-glutamate + H2O = [amino-group carrier protein]-C-terminal-L-glutamate + L-lysine. It carries out the reaction [amino-group carrier protein]-C-terminal-gamma-(L-ornithyl)-L-glutamate + H2O = [amino-group carrier protein]-C-terminal-L-glutamate + L-ornithine. Its pathway is amino-acid biosynthesis; L-lysine biosynthesis via AAA pathway; L-lysine from L-alpha-aminoadipate (Thermus route): step 5/5. The protein operates within amino-acid biosynthesis; L-arginine biosynthesis. Catalyzes the release of L-lysine from [LysW]-gamma-L-lysine and the release of L-ornithine from [LysW]-L-ornithine. The protein is Putative [LysW]-lysine/[LysW]-ornithine hydrolase of Pyrococcus abyssi (strain GE5 / Orsay).